The chain runs to 383 residues: Omega-6 fatty acid desaturase, endoplasmic reticulum isozyme 2 (383 aa).

The next 3 helical transmembrane spans lie at 61–81, 85–105, and 117–137; these read TIAF…PGPL, GMAI…VIAH, and LLDD…YFSW. The Histidine box-1 motif lies at 105–109; it reads HECGH. The Histidine box-2 motif lies at 141 to 145; the sequence is HRRHH. 3 helical membrane passes run 179 to 199, 225 to 245, and 249 to 269; these read VLTL…LNVS, IYIS…LAMA, and AWVV…LVLI. A Histidine box-3 motif is present at residues 315–319; the sequence is HVAHH.

This sequence belongs to the fatty acid desaturase type 1 family.

It localises to the endoplasmic reticulum membrane. It functions in the pathway lipid metabolism; polyunsaturated fatty acid biosynthesis. ER (microsomal) omega-6 fatty acid desaturase introduces the second double bond in the biosynthesis of 18:3 fatty acids, important constituents of plant membranes. It is thought to use cytochrome b5 as an electron donor and to act on fatty acids esterified to phosphatidylcholine and, possibly, other phospholipids. This Glycine max (Soybean) protein is Omega-6 fatty acid desaturase, endoplasmic reticulum isozyme 2 (FAD2-2).